A 426-amino-acid polypeptide reads, in one-letter code: Glutamate-1-semialdehyde 2,1-aminomutase (426 aa).

The residue at position 265 (lysine 265) is an N6-(pyridoxal phosphate)lysine.

The protein belongs to the class-III pyridoxal-phosphate-dependent aminotransferase family. HemL subfamily. In terms of assembly, homodimer. It depends on pyridoxal 5'-phosphate as a cofactor.

It is found in the cytoplasm. It carries out the reaction (S)-4-amino-5-oxopentanoate = 5-aminolevulinate. Its pathway is porphyrin-containing compound metabolism; protoporphyrin-IX biosynthesis; 5-aminolevulinate from L-glutamyl-tRNA(Glu): step 2/2. This is Glutamate-1-semialdehyde 2,1-aminomutase (hemL) from Salmonella typhimurium (strain SL1344).